The following is a 140-amino-acid chain: MKITNVRINQLVGEGKVKALVSVVFDGVLTVTDLKVVEGSKGLFVSMPSRKNKDGKFRDVVYPCTAEMRQAIQNAVLGAYDAMTRSGVAPQAGGLQGAEEPTAVEPAPQLQDESELPWEPGDDGEGARELAAVAGAVAAD.

The segment at 88 to 127 (VAPQAGGLQGAEEPTAVEPAPQLQDESELPWEPGDDGEGA) is disordered. Positions 112–124 (DESELPWEPGDDG) are enriched in acidic residues.

It belongs to the SpoVG family.

Could be involved in septation. This Symbiobacterium thermophilum (strain DSM 24528 / JCM 14929 / IAM 14863 / T) protein is Putative septation protein SpoVG.